The chain runs to 251 residues: MPKRDAPWRSMAGTSKVSRNANYSPRSGIGPRINKAAEWVNRPMYRKPRIYRTLRTPDVPRGCEGPCKVQSFEQRHDILHTGKVMCISDVTRGNGITHRVGKRFCVKSVYILGKIWMDENIKLKNHTNSVMFWLVRDRRPYGTPMDFGQVFNMFDNEPSTATVKNDLRDRYQVMHRFYGKVTGGQYASNEHAIVRRFWKVNNHVVYNHQEAGKYENHTENALLLYMACTHASNPVYATLKIRIYFYDSILN.

Residues 1-29 (MPKRDAPWRSMAGTSKVSRNANYSPRSGI) are disordered. Residues 3-20 (KRDAPWRSMAGTSKVSRN) carry the Bipartite nuclear localization signal motif. Positions 12–25 (AGTSKVSRNANYSP) are enriched in polar residues. A Nuclear localization signal motif is present at residues 35–49 (KAAEWVNRPMYRKPR). The segment at 63–80 (CEGPCKVQSFEQRHDILH) is a zinc-finger region. The Nuclear export signal motif lies at 96-117 (ITHRVGKRFCVKSVYILGKIWM). The short motif at 195–242 (RRFWKVNNHVVYNHQEAGKYENHTENALLLYMACTHASNPVYATLKIR) is the Bipartite nuclear localization signal element.

This sequence belongs to the geminiviridae capsid protein family. Homomultimer. Binds to single-stranded and double-stranded viral DNA. Interacts (via nuclear localization signals) with host importin alpha-1a.

The protein localises to the virion. The protein resides in the host nucleus. Functionally, encapsidates the viral DNA into characteristic twinned ('geminate') particles. Binds the genomic viral ssDNA and shuttles it into and out of the cell nucleus. The CP of bipartite geminiviruses is not required for cell-to-cell or systemic movement. This chain is Capsid protein, found in Solanum tuberosum (Potato).